A 365-amino-acid chain; its full sequence is Inositol 4-methyltransferase (365 aa).

D232 contributes to the S-adenosyl-L-methionine binding site. The active-site Proton acceptor is the H270.

It belongs to the class I-like SAM-binding methyltransferase superfamily. Cation-independent O-methyltransferase family. In terms of tissue distribution, leaves and roots. The levels found in the leaves are 25 times greater than in the roots.

It catalyses the reaction myo-inositol + S-adenosyl-L-methionine = 1D-4-O-methyl-myo-inositol + S-adenosyl-L-homocysteine + H(+). It participates in polyol metabolism; myo-inositol metabolism. Catalyzes the methylation of myo-inositol into ononitol (1D-4-O-methyl myo-inositol), the first step in the biosynthesis of the cyclic sugar pinitol which has osmoprotective properties. In Mesembryanthemum crystallinum (Common ice plant), this protein is Inositol 4-methyltransferase (IMT1).